Reading from the N-terminus, the 279-residue chain is uncharacterized protein (279 aa).

A compositionally biased stretch (low complexity) spans 1 to 29 (MSSRYTSSYTPSSRYGSGWDYSSSYSSSR). Disordered stretches follow at residues 1-111 (MSSR…APRE) and 137-233 (LTLA…AEAL). Over residues 30 to 44 (TSRDRDTGSYRDRDY) the composition is skewed to basic and acidic residues. Residues 45–59 (SSTSYTSTRPRYSTY) are compositionally biased toward low complexity. A compositionally biased stretch (acidic residues) spans 142–153 (EPEESEEEEDDE). The segment covering 170–186 (ESSPVSSPVKEVSSAAS) has biased composition (low complexity). Positions 189-205 (ANDNGNETENRTPSPTV) are enriched in polar residues. Over residues 221–233 (SDVKKEGGDAEAL) the composition is skewed to basic and acidic residues.

This is an uncharacterized protein from Caenorhabditis elegans.